A 611-amino-acid polypeptide reads, in one-letter code: DNA mismatch repair protein MutL (611 aa).

This sequence belongs to the DNA mismatch repair MutL/HexB family.

In terms of biological role, this protein is involved in the repair of mismatches in DNA. It is required for dam-dependent methyl-directed DNA mismatch repair. May act as a 'molecular matchmaker', a protein that promotes the formation of a stable complex between two or more DNA-binding proteins in an ATP-dependent manner without itself being part of a final effector complex. This chain is DNA mismatch repair protein MutL, found in Borrelia garinii subsp. bavariensis (strain ATCC BAA-2496 / DSM 23469 / PBi) (Borreliella bavariensis).